We begin with the raw amino-acid sequence, 140 residues long: Putative pre-16S rRNA nuclease (140 aa).

This sequence belongs to the YqgF nuclease family.

The protein localises to the cytoplasm. Could be a nuclease involved in processing of the 5'-end of pre-16S rRNA. The polypeptide is Putative pre-16S rRNA nuclease (Halothermothrix orenii (strain H 168 / OCM 544 / DSM 9562)).